Here is an 84-residue protein sequence, read N- to C-terminus: uncharacterized protein (84 aa).

Belongs to the chlamydial CPn_0711/CT_665/TC_0036 family.

This is an uncharacterized protein from Chlamydia muridarum (strain MoPn / Nigg).